The chain runs to 337 residues: MVREEVTISTRTLQWKCVESRVDSKRLYYGRFILSPLMKGQADTIGISMRRALLGEIEGTCITRAKFDKVTHEYSTIVGIEESVHEILMNLKEIVLRSNLYGTLDASICVRGPRSVTAQDIISPPSVEIVDTTQHIANLTEPIDLCIGLQIERDRGYRLKTPNNYQDGSYPIDTVFMPVRNANHSIHSYGNGTEKQEILFLEIWTNGSLTPKEALYEASRNLINLFIPFLHAEEQEILLEDSENISTVPLFTFHNELANLKKNKKGIALKCIFIDQLELPSRTYNCLKRSNIHTLFDLLSNSKEDLMRIEHFRVEDVKQILDILQKNFAMNLPKDFF.

The segment at 1 to 233 is alpha N-terminal domain (alpha-NTD); sequence MVREEVTIST…NLFIPFLHAE (233 aa). Residues 266–337 form an alpha C-terminal domain (alpha-CTD) region; it reads GIALKCIFID…FAMNLPKDFF (72 aa).

The protein belongs to the RNA polymerase alpha chain family. As to quaternary structure, in plastids the minimal PEP RNA polymerase catalytic core is composed of four subunits: alpha, beta, beta', and beta''. When a (nuclear-encoded) sigma factor is associated with the core the holoenzyme is formed, which can initiate transcription.

The protein localises to the plastid. Its subcellular location is the chloroplast. It carries out the reaction RNA(n) + a ribonucleoside 5'-triphosphate = RNA(n+1) + diphosphate. DNA-dependent RNA polymerase catalyzes the transcription of DNA into RNA using the four ribonucleoside triphosphates as substrates. The chain is DNA-directed RNA polymerase subunit alpha from Ceratophyllum demersum (Rigid hornwort).